A 147-amino-acid chain; its full sequence is UPF0306 protein YpAngola_A4021 (147 aa).

This sequence belongs to the UPF0306 family.

The chain is UPF0306 protein YpAngola_A4021 from Yersinia pestis bv. Antiqua (strain Angola).